The following is a 37-amino-acid chain: Large ribosomal subunit protein bL36 (37 aa).

It belongs to the bacterial ribosomal protein bL36 family.

This chain is Large ribosomal subunit protein bL36, found in Nocardia farcinica (strain IFM 10152).